The primary structure comprises 654 residues: Protein fem-1 homolog A-A (654 aa).

ANK repeat units lie at residues 2–31 (DLHTAVYNAAHDGKLPLLQKLLAGRGREEL), 40–70 (GGGTPLLIAARRGHLDVVEYLVDHCGASVEA), 82–111 (EGAPPLWAASAAGHLAVVRSLLRRGASVNR), 115–145 (TNSTPLRAACFDGHLDVVRYLVGEHKADLEV), 149–178 (HGHTCLMISCYKGHREIARYLLERGAQVNR), 182–211 (KGNTALHDCAESGSLEILQLLLGCHARMER), and 214–243 (YGMTPLLAASVTGHTNIVEYLIQEQPGHEQ). Residue serine 108 is modified to Phosphoserine. Positions 242-265 (EQLSGTELPGEGSSQVAGNHCSTP) are disordered. Residues 253–263 (GSSQVAGNHCS) show a composition bias toward polar residues. 2 TPR repeats span residues 283–317 (VEALELLGATYVDKKRDLLGALKHWRRAMELRHQG) and 375–408 (SYYIRYRGAVYADSGNFERCIRLWKYALDMQQNN). ANK repeat units follow at residues 519-561 (NGFT…DPDS) and 565-594 (DNNTPLHIAAQNNCPAIMDALIEAGAHMDA). Serine 608 bears the Phosphoserine mark.

The protein belongs to the fem-1 family. In terms of assembly, component of a CRL2 E3 ubiquitin-protein ligase complex, also named ECS (Elongin BC-CUL2/5-SOCS-box protein) complex, composed of CUL2, Elongin BC (ELOB and ELOC), RBX1 and substrate-specific adapter FEM1A. Interacts with PTGER4. Interacts with NFKB1; the interaction is direct. Post-translationally, phosphorylated; highly phosphorylated in myoblasts and myotubes. Phosphorylation at Ser-108 and Ser-608 promote PGE2-EP4-mediated inhibition of inflammation. Dephosphorylated by protein phosphatase 2A (PP2A). Preferentially expressed in cardiac muscle, brain and liver (at protein level). Also expressed in skeletal muscle.

It is found in the mitochondrion. The protein localises to the cytoplasm. Its pathway is protein modification; protein ubiquitination. Its function is as follows. Substrate-recognition component of a Cul2-RING (CRL2) E3 ubiquitin-protein ligase complex of the DesCEND (destruction via C-end degrons) pathway, which recognizes a C-degron located at the extreme C terminus of target proteins, leading to their ubiquitination and degradation. The C-degron recognized by the DesCEND pathway is usually a motif of less than ten residues and can be present in full-length proteins, truncated proteins or proteolytically cleaved forms. The CRL2(FEM1A) complex specifically recognizes proteins with an arginine at the C-terminus: recognizes and binds proteins ending with -Lys/Arg-Xaa-Arg and -Lys/Arg-Xaa-Xaa-Arg C-degrons, such as SIL1 or OR51B2, leading to their ubiquitination and degradation. Involved in PGE2-EP4-mediated inhibition of inflammation of macrophages via interaction with NFKB1 and PTGER4. Promotes inflammation in brain microglia through MAP2K4/MKK4-mediated signaling. This is Protein fem-1 homolog A-A from Mus musculus (Mouse).